The primary structure comprises 197 residues: ATP-dependent Clp protease proteolytic subunit (197 aa).

Residue Ser-102 is the Nucleophile of the active site. Residue His-127 is part of the active site.

It belongs to the peptidase S14 family. Fourteen ClpP subunits assemble into 2 heptameric rings which stack back to back to give a disk-like structure with a central cavity, resembling the structure of eukaryotic proteasomes.

It is found in the cytoplasm. It carries out the reaction Hydrolysis of proteins to small peptides in the presence of ATP and magnesium. alpha-casein is the usual test substrate. In the absence of ATP, only oligopeptides shorter than five residues are hydrolyzed (such as succinyl-Leu-Tyr-|-NHMec, and Leu-Tyr-Leu-|-Tyr-Trp, in which cleavage of the -Tyr-|-Leu- and -Tyr-|-Trp bonds also occurs).. Functionally, cleaves peptides in various proteins in a process that requires ATP hydrolysis. Has a chymotrypsin-like activity. Plays a major role in the degradation of misfolded proteins. This chain is ATP-dependent Clp protease proteolytic subunit, found in Buchnera aphidicola subsp. Schizaphis graminum (strain Sg).